The primary structure comprises 406 residues: Imidazolonepropionase (406 aa).

Positions 65 and 67 each coordinate Fe(3+). H65 and H67 together coordinate Zn(2+). 3 residues coordinate 4-imidazolone-5-propanoate: R74, Y137, and H170. An N-formimidoyl-L-glutamate-binding site is contributed by Y137. Residue H235 coordinates Fe(3+). H235 provides a ligand contact to Zn(2+). Q238 is a 4-imidazolone-5-propanoate binding site. Position 310 (D310) interacts with Fe(3+). D310 provides a ligand contact to Zn(2+). N312 and G314 together coordinate N-formimidoyl-L-glutamate. Position 315 (T315) interacts with 4-imidazolone-5-propanoate.

The protein belongs to the metallo-dependent hydrolases superfamily. HutI family. It depends on Zn(2+) as a cofactor. Requires Fe(3+) as cofactor.

It localises to the cytoplasm. The catalysed reaction is 4-imidazolone-5-propanoate + H2O = N-formimidoyl-L-glutamate. It participates in amino-acid degradation; L-histidine degradation into L-glutamate; N-formimidoyl-L-glutamate from L-histidine: step 3/3. Catalyzes the hydrolytic cleavage of the carbon-nitrogen bond in imidazolone-5-propanoate to yield N-formimidoyl-L-glutamate. It is the third step in the universal histidine degradation pathway. This is Imidazolonepropionase from Vibrio vulnificus (strain CMCP6).